The sequence spans 188 residues: Chitin synthase 2 (188 aa).

The protein belongs to the chitin synthase family.

Its subcellular location is the cell membrane. It catalyses the reaction [(1-&gt;4)-N-acetyl-beta-D-glucosaminyl](n) + UDP-N-acetyl-alpha-D-glucosamine = [(1-&gt;4)-N-acetyl-beta-D-glucosaminyl](n+1) + UDP + H(+). Functionally, polymerizes chitin, a structural polymer of the cell wall and septum, by transferring the sugar moiety of UDP-GlcNAc to the non-reducing end of the growing chitin polymer. The sequence is that of Chitin synthase 2 (CHS2) from Exophiala jeanselmei (Dematiaceous fungus).